A 153-amino-acid polypeptide reads, in one-letter code: Transcriptional repressor NrdR (153 aa).

A zinc finger spans residues 3–34; it reads CPSCSHNGTRVLDSRPVDEGRSIRRRRECESC. An ATP-cone domain is found at 49–139; the sequence is LIVVKKEGTR…VYRQFKDLNV (91 aa).

This sequence belongs to the NrdR family. Zn(2+) serves as cofactor.

Its function is as follows. Negatively regulates transcription of bacterial ribonucleotide reductase nrd genes and operons by binding to NrdR-boxes. The protein is Transcriptional repressor NrdR of Bacillus anthracis (strain A0248).